A 123-amino-acid polypeptide reads, in one-letter code: MSYINKEGKTTAWRVMTVRQQVSAVLSYGKIQTTLKKAKNTQKRLEKIITIAKVDNFNNRRAVKKWLLNTNSLDVDQLTNHLFKKVAPRFLKRNGGYSRVLKLGVRRGDSTEMAILQLIDATN.

The protein belongs to the bacterial ribosomal protein bL17 family. Part of the 50S ribosomal subunit. Contacts protein L32.

This is Large ribosomal subunit protein bL17 from Mycoplasma genitalium (strain ATCC 33530 / DSM 19775 / NCTC 10195 / G37) (Mycoplasmoides genitalium).